The following is a 559-amino-acid chain: 3-phosphoinositide-dependent protein kinase 1 (559 aa).

Tyrosine 9 carries the post-translational modification Phosphotyrosine; by SRC and INSR. Phosphoserine is present on serine 25. The interval 25–83 (SPSMVRSQTEPGSSPGIPSGVSRQGSTMDGTTAEARPSTNPLQQHPAQLPPQPRKKRPE) is disordered. Low complexity predominate over residues 35-44 (PGSSPGIPSG). The span at 45-54 (VSRQGSTMDG) shows a compositional bias: polar residues. Residues 85 to 345 (FKFGKILGEG…YGPLKAHPFF (261 aa)) enclose the Protein kinase domain. Residues 95–97 (SFS) and lysine 114 each bind ATP. The tract at residues 116-160 (LEKRHIIKENKVPYVTRERDVMSRLDHPFFVKLYFTFQDDEKLYF) is PIF-pocket. ATP-binding positions include 163 to 165 (SYA) and glutamate 169. Catalysis depends on aspartate 208, which acts as the Proton acceptor. Glutamate 212 and aspartate 226 together coordinate ATP. Serine 244 bears the Phosphoserine mark. N6-acetyllysine is present on lysine 307. Threonine 357 is subject to Phosphothreonine; by MELK. Phosphotyrosine; by SRC and INSR is present on residues tyrosine 376 and tyrosine 379. Serine 396 carries the phosphoserine modification. At serine 397 the chain carries Phosphoserine; by MAP3K5. The residue at position 399 (serine 399) is a Phosphoserine. Serine 401 is subject to Phosphoserine; by MAP3K5. Serine 413 bears the Phosphoserine mark. One can recognise a PH domain in the interval 462–553 (KMGPVDKRKG…EVWRQQYQSN (92 aa)). Serine 504 carries the post-translational modification Phosphoserine; by PKC/PRKCQ. Phosphothreonine; by autocatalysis is present on threonine 516. Serine 532 is subject to Phosphoserine; by PKC/PRKCQ.

Belongs to the protein kinase superfamily. AGC Ser/Thr protein kinase family. PDPK1 subfamily. In terms of assembly, homodimer in its autoinhibited state. Active as monomer. Interacts with NPRL2, PAK1, PTK2B, GRB14, STRAP and IKKB. The Tyr-9 phosphorylated form interacts with SRC, RASA1 and CRK (via their SH2 domains). Interacts with SGK3 in a phosphorylation-dependent manner. The tyrosine-phosphorylated form interacts with PTPN6. The Ser-244 phosphorylated form interacts with YWHAH and YWHAQ. Binds INSR in response to insulin. Interacts (via PH domain) with SMAD3, SMAD4 and SMAD7. Interacts with PKN2; the interaction stimulates PDPK1 autophosphorylation, its PI(3,4,5)P3-dependent kinase activity toward 'Ser-473' of AKT1 but also activates its kinase activity toward PRKCD and PRKCZ. Interacts with PKN1 (via C-terminus) and PPARG. In terms of processing, phosphorylation on Ser-244 in the activation loop is required for full activity. PDPK1 itself can autophosphorylate Ser-244, leading to its own activation. Autophosphorylation is inhibited by the apoptotic C-terminus cleavage product of PKN2. Tyr-9 phosphorylation is critical for stabilization of both PDPK1 and the PDPK1/SRC complex via HSP90-mediated protection of PDPK1 degradation. Angiotensin II stimulates the tyrosine phosphorylation of PDPK1 in vascular smooth muscle in a calcium- and SRC-dependent manner. Phosphorylated on Tyr-9, Tyr-376 and Tyr-379 by INSR in response to insulin. Palmitate negatively regulates autophosphorylation at Ser-244 and palmitate-induced phosphorylation at Ser-532 and Ser-504 by PKC/PRKCQ negatively regulates its ability to phosphorylate PKB/AKT1. Phosphorylation at Thr-357 by MELK partially inhibits kinase activity, the inhibition is cooperatively enhanced by phosphorylation at Ser-397 and Ser-401 by MAP3K5. Monoubiquitinated in the kinase domain, deubiquitinated by USP4. In terms of tissue distribution, highly expressed in heart, brain, liver and testis, also expressed in embryonic cells.

It localises to the cytoplasm. Its subcellular location is the nucleus. It is found in the cell membrane. The protein resides in the cell junction. The protein localises to the focal adhesion. The catalysed reaction is L-seryl-[protein] + ATP = O-phospho-L-seryl-[protein] + ADP + H(+). It carries out the reaction L-threonyl-[protein] + ATP = O-phospho-L-threonyl-[protein] + ADP + H(+). With respect to regulation, homodimerization regulates its activity by maintaining the kinase in an autoinhibitory conformation. NPRL2 down-regulates its activity by interfering with tyrosine phosphorylation at the Tyr-9, Tyr-376 and Tyr-379 residues. The 14-3-3 protein YWHAQ acts as a negative regulator by association with the residues surrounding the Ser-244 residue. STRAP positively regulates its activity by enhancing its autophosphorylation and by stimulating its dissociation from YWHAQ. SMAD2, SMAD3, SMAD4 and SMAD7 also positively regulate its activity by stimulating its dissociation from YWHAQ. Activated by phosphorylation on Tyr-9, Tyr-376 and Tyr-379 by INSR in response to insulin. Functionally, serine/threonine kinase which acts as a master kinase, phosphorylating and activating a subgroup of the AGC family of protein kinases. Its targets include: protein kinase B (PKB/AKT1, PKB/AKT2, PKB/AKT3), p70 ribosomal protein S6 kinase (RPS6KB1), p90 ribosomal protein S6 kinase (RPS6KA1, RPS6KA2 and RPS6KA3), cyclic AMP-dependent protein kinase (PRKACA), protein kinase C (PRKCD and PRKCZ), serum and glucocorticoid-inducible kinase (SGK1, SGK2 and SGK3), p21-activated kinase-1 (PAK1), TSSK3, protein kinase PKN (PKN1 and PKN2). Plays a central role in the transduction of signals from insulin by providing the activating phosphorylation to PKB/AKT1, thus propagating the signal to downstream targets controlling cell proliferation and survival, as well as glucose and amino acid uptake and storage. Negatively regulates the TGF-beta-induced signaling by: modulating the association of SMAD3 and SMAD7 with TGF-beta receptor, phosphorylating SMAD2, SMAD3, SMAD4 and SMAD7, preventing the nuclear translocation of SMAD3 and SMAD4 and the translocation of SMAD7 from the nucleus to the cytoplasm in response to TGF-beta. Activates PPARG transcriptional activity and promotes adipocyte differentiation. Activates the NF-kappa-B pathway via phosphorylation of IKKB. The tyrosine phosphorylated form is crucial for the regulation of focal adhesions by angiotensin II. Controls proliferation, survival, and growth of developing pancreatic cells. Participates in the regulation of Ca(2+) entry and Ca(2+)-activated K(+) channels of mast cells. Essential for the motility of vascular endothelial cells (ECs) and is involved in the regulation of their chemotaxis. Plays a critical role in cardiac homeostasis by serving as a dual effector for cell survival and beta-adrenergic response. Plays an important role during thymocyte development by regulating the expression of key nutrient receptors on the surface of pre-T cells and mediating Notch-induced cell growth and proliferative responses. Provides negative feedback inhibition to toll-like receptor-mediated NF-kappa-B activation in macrophages. This chain is 3-phosphoinositide-dependent protein kinase 1 (Pdpk1), found in Mus musculus (Mouse).